The chain runs to 127 residues: Biogenesis of lysosome-related organelles complex 1 subunit 2 (127 aa).

It belongs to the BLOC1S2 family. In terms of assembly, component of the biogenesis of lysosome-related organelles complex-1 (BLOC-1). Interacts with BLOS1 and SNX1.

It localises to the cytoplasm. The protein localises to the endosome. In terms of biological role, component of the biogenesis of lysosome-related organelles complex-1 (BLOC-1), a complex that mediates the vacuolar degradative transport via the intracellular vesicle trafficking from the endosome to the vacuole. The polypeptide is Biogenesis of lysosome-related organelles complex 1 subunit 2 (BLOS2) (Arabidopsis thaliana (Mouse-ear cress)).